A 584-amino-acid chain; its full sequence is Adenine deaminase (584 aa).

The protein belongs to the metallo-dependent hydrolases superfamily. Adenine deaminase family. It depends on Mn(2+) as a cofactor.

The catalysed reaction is adenine + H2O + H(+) = hypoxanthine + NH4(+). The chain is Adenine deaminase from Methanococcoides burtonii (strain DSM 6242 / NBRC 107633 / OCM 468 / ACE-M).